The sequence spans 325 residues: MPTIDFTFCEINPKKGFGGANGNKISLFYNNELYMVKFPPKPSTHKEMSYTNGCFSEYVACHIVNSLGLKVQETLLGTYKNKIVVACKDFTTHQYELVDFLSLKNTMIELEKSGKDTNLNDVLYAIDNQHFIEPKVLKCFFWDMFVADTLLGNFDRHNGNWGFLRASNSKEYQIAPIFDCGSCLYPQADDVVCQKVLSNIDELNARIYNFPQSILKDDNDKKINYYDFLTQTNNKDCLDALLRIYPRIDMNKIHSIIDNTPFMSEIHKEFLHTMLDERKSKIIDVAHTRAIELSLQHKQAHSNPYDNADDLDNSNEYTPTPKRRR.

Residues 21-24 (NGNK), K37, Q72, and 88-90 (KDF) contribute to the ATP site. Residues N160 and D179 each contribute to the Mg(2+) site. D179 is an ATP binding site. The disordered stretch occupies residues 296-325 (QHKQAHSNPYDNADDLDNSNEYTPTPKRRR).

Autophosphorylates on either Thr-3 or Thr-7.

Its subcellular location is the secreted. The protein resides in the host cytoplasm. It is found in the host cytosol. The protein localises to the host nucleus. It carries out the reaction L-seryl-[protein] + ATP = O-phospho-L-seryl-[protein] + ADP + H(+). The enzyme catalyses L-threonyl-[protein] + ATP = O-phospho-L-threonyl-[protein] + ADP + H(+). Functionally, virulence factor acting as a pro-inflammatory protein that induces the secretion of the pro-inflammatory cytokines TNF-alpha (tumor necrosis factor-alpha) and IL-8 (interleukin-8) from human macrophages, as well as enhanced translocation of the transcription factor NF-kappa-B complex in macrophages. Is a kinase capable of autophosphorylating itself at a threonine residue near the N-terminus. Also leads to enhanced phosphorylation of the NF-kappa-B p65 subunit (RELA) at 'Ser-276' in human epithelial cancer cells; its kinase activity is required for this enhanced phosphorylation that up-regulates NF-kappa-B activity, but it does not directly phosphorylate this protein. Thus, the kinase activity of CtkA may play an important role in the induction of host inflammatory responses during H.pylori infection. The polypeptide is Serine/threonine-protein kinase CtkA (ctkA) (Helicobacter pylori (strain J99 / ATCC 700824) (Campylobacter pylori J99)).